The chain runs to 213 residues: FMN-dependent NADH:quinone oxidoreductase (213 aa).

Residue Ser10 coordinates FMN.

This sequence belongs to the azoreductase type 1 family. As to quaternary structure, homodimer. FMN serves as cofactor.

It carries out the reaction 2 a quinone + NADH + H(+) = 2 a 1,4-benzosemiquinone + NAD(+). It catalyses the reaction N,N-dimethyl-1,4-phenylenediamine + anthranilate + 2 NAD(+) = 2-(4-dimethylaminophenyl)diazenylbenzoate + 2 NADH + 2 H(+). Functionally, quinone reductase that provides resistance to thiol-specific stress caused by electrophilic quinones. Also exhibits azoreductase activity. Catalyzes the reductive cleavage of the azo bond in aromatic azo compounds to the corresponding amines. This Opitutus terrae (strain DSM 11246 / JCM 15787 / PB90-1) protein is FMN-dependent NADH:quinone oxidoreductase.